The sequence spans 97 residues: Cysteine-rich and transmembrane domain-containing protein 1 (97 aa).

Pro residues predominate over residues M1–G40. Residues M1–T61 form a disordered region. Low complexity predominate over residues Y41–G50. A helical membrane pass occupies residues L74 to C91.

Belongs to the CYSTM1 family.

The protein resides in the membrane. The chain is Cysteine-rich and transmembrane domain-containing protein 1 (CYSTM1) from Homo sapiens (Human).